The sequence spans 415 residues: T-cell-specific guanine nucleotide triphosphate-binding protein 1 (415 aa).

Positions 55 to 237 (APLHIAVTGE…PKLETKLLQD (183 aa)) constitute an IRG-type G domain. Residues glycine 66, glycine 68, lysine 69, and serine 70 each contribute to the GDP site. Position 89 is a (Microbial infection) Phosphothreonine; by ROP17 (threonine 89). GDP-binding residues include glycine 90, lysine 171, aspartate 173, and asparagine 219.

It belongs to the TRAFAC class dynamin-like GTPase superfamily. IRG family. In terms of assembly, monomer, homodimer or homotetramer in the presence of GTP. Forms higher order homooligomers in GTP-dependent manner. As to quaternary structure, (Microbial infection) Interacts with Toxoplasma gondii ROP18. (Microbial infection) Phosphorylated by Toxoplasma gondii ROP17; the phosphorylation leads to disassembly of IRGB6 (TGTP1/TGTP2) polymers into monomers and dimers. Phosphorylated by Toxoplasma gondii ROP18. Expressed in thymus and lymph nodes, predominantly T-cells. Not expressed by immature CD4(+) CD8(+) thymocytes (at protein level). Expressed in IFNG-stimulated macrophages. Expressed at low levels in unstimulated astrocytes. Due to sequence similarity with Tgtp2, it is impossible to assign unambiguously experimental data published in the literature to Tgtp1 or Tgtp2 gene.

The protein resides in the cytoplasm. The protein localises to the endoplasmic reticulum. It is found in the golgi apparatus. Its subcellular location is the parasitophorous vacuole membrane. The catalysed reaction is GTP + H2O = GDP + phosphate + H(+). In terms of biological role, involved in innate cell-autonomous resistance to intracellular pathogens, such as Toxoplasma gondii. During avirulent type II T.gondii infection, recruited to the parasitophorous vacuole (PV) membrane, leading to PV vesiculation and rupture, and subsequent digestion of the parasite within the cytosol. Not recruited to virulent type I T.gondii PV membrane. May confer an antiviral state for vesicular stomatitis virus. In Mus musculus (Mouse), this protein is T-cell-specific guanine nucleotide triphosphate-binding protein 1 (Tgtp1).